The primary structure comprises 578 residues: NADH-quinone oxidoreductase subunit C/D (578 aa).

The NADH dehydrogenase I subunit C stretch occupies residues 1 to 167 (MILSLFKLFG…DEFYFTKQKE (167 aa)). The tract at residues 192 to 578 (EYMFLNFGPN…IDFVMSDVDR (387 aa)) is NADH dehydrogenase I subunit D.

It in the N-terminal section; belongs to the complex I 30 kDa subunit family. In the C-terminal section; belongs to the complex I 49 kDa subunit family. NDH-1 is composed of 13 different subunits. Subunits NuoB, CD, E, F, and G constitute the peripheral sector of the complex.

The protein resides in the cell inner membrane. The catalysed reaction is a quinone + NADH + 5 H(+)(in) = a quinol + NAD(+) + 4 H(+)(out). Functionally, NDH-1 shuttles electrons from NADH, via FMN and iron-sulfur (Fe-S) centers, to quinones in the respiratory chain. The immediate electron acceptor for the enzyme in this species is believed to be ubiquinone. Couples the redox reaction to proton translocation (for every two electrons transferred, four hydrogen ions are translocated across the cytoplasmic membrane), and thus conserves the redox energy in a proton gradient. In Buchnera aphidicola subsp. Cinara cedri (strain Cc), this protein is NADH-quinone oxidoreductase subunit C/D.